A 300-amino-acid polypeptide reads, in one-letter code: Free fatty acid receptor 1 (300 aa).

Over 1 to 8 (MDLPPQLS) the chain is Extracellular. The helical transmembrane segment at 9-31 (FALYVAAFALGFPLNVLAIRGAR) threads the bilayer. The Cytoplasmic segment spans residues 32 to 41 (AHARRRLTPS). Residues 42 to 64 (LVYALNLGCSDLLLTVSLPLKAV) form a helical membrane-spanning segment. At 65–79 (EALASGAWPLPASLC) the chain is on the extracellular side. An intrachain disulfide couples Cys-79 to Cys-170. A helical transmembrane segment spans residues 80–101 (PVFGVAHFAPLYAGGGFLAALS). The Cytoplasmic segment spans residues 102–121 (AGRYLGAAFPLGYQAFRRPC). A helical transmembrane segment spans residues 122 to 142 (YSWGVCAAIWALVLCHLGLVF). Residues 143–178 (VLEAPGGWLDHSNTSLGINTPVNGSPVCLEAWDPAS) lie on the Extracellular side of the membrane. N-linked (GlcNAc...) asparagine glycosylation is present at Asn-155. Residues 179 to 200 (AGPARFSLSLLLFFLPLAITAF) traverse the membrane as a helical segment. Topologically, residues 201-223 (CYVGCLRALAHSGLTHRRKLRAA) are cytoplasmic. The helical transmembrane segment at 224–248 (WVAGGALLTLLLCVGPYNASNVASF) threads the bilayer. Residues 249 to 256 (LNPNLGGS) are Extracellular-facing. A helical transmembrane segment spans residues 257-279 (WRKLGLITGAWSVVLNPLVTGYL). At 280–300 (GRGPGLKTVCAARTQGSTSQK) the chain is on the cytoplasmic side.

The protein belongs to the G-protein coupled receptor 1 family.

It is found in the cell membrane. G-protein coupled receptor for medium and long chain saturated and unsaturated fatty acids that plays an important role in glucose homeostasis. Fatty acid binding increases glucose-stimulated insulin secretion, and may also enhance the secretion of glucagon-like peptide 1 (GLP-1). May also play a role in bone homeostasis; receptor signaling activates pathways that inhibit osteoclast differentiation. Ligand binding leads to a conformation change that triggers signaling via G-proteins that activate phospholipase C, leading to an increase of the intracellular calcium concentration. Seems to act through a G(q) and G(i)-mediated pathway. Mediates the anti-inflammatory effects of omega-3 polyunsaturated fatty acids (PUFAs) via inhibition of NLRP3 inflammasome activation. This is Free fatty acid receptor 1 (FFAR1) from Macaca fascicularis (Crab-eating macaque).